The chain runs to 178 residues: Large ribosomal subunit protein bL17 (178 aa).

Residues 150–178 (PADEPVVAEENAPQSAVKDAVDECEGKAD) are disordered. Over residues 168–178 (DAVDECEGKAD) the composition is skewed to basic and acidic residues.

This sequence belongs to the bacterial ribosomal protein bL17 family. As to quaternary structure, part of the 50S ribosomal subunit. Contacts protein L32.

This Geobacter metallireducens (strain ATCC 53774 / DSM 7210 / GS-15) protein is Large ribosomal subunit protein bL17.